Reading from the N-terminus, the 683-residue chain is Acyl-CoA synthetase short-chain family member 3, mitochondrial (683 aa).

A mitochondrion-targeting transit peptide spans Met1–Gly29. CoA is bound at residue Glu223–Arg226. Residues Gly421 to Arg423 and Asp442 to Thr447 contribute to the ATP site. N6-succinyllysine is present on Lys514. The residue at position 520 (Lys520) is an N6-acetyllysine. ATP contacts are provided by Asp535, Arg550, and Arg561. CoA is bound at residue Arg620.

The protein belongs to the ATP-dependent AMP-binding enzyme family. In terms of tissue distribution, expressed in a wide range of tissues, with the highest levels observed in the liver followed by kidney.

The protein localises to the mitochondrion matrix. It carries out the reaction acetate + ATP + CoA = acetyl-CoA + AMP + diphosphate. The enzyme catalyses propanoate + ATP + CoA = propanoyl-CoA + AMP + diphosphate. It catalyses the reaction butanoate + ATP + CoA = butanoyl-CoA + AMP + diphosphate. In terms of biological role, catalyzes the synthesis of acetyl-CoA from short-chain fatty acids. Propionate is the preferred substrate but can also utilize acetate and butyrate with a much lower affinity. The chain is Acyl-CoA synthetase short-chain family member 3, mitochondrial (Acss3) from Rattus norvegicus (Rat).